We begin with the raw amino-acid sequence, 516 residues long: Flagellar radial spoke protein 3 (516 aa).

Polar residues-rich tracts occupy residues M1–Y11 and A62–S74. Disordered stretches follow at residues M1–T32, A60–A90, N388–E412, and A424–E447. A compositionally biased stretch (basic and acidic residues) spans W391–E412.

The protein belongs to the flagellar radial spoke RSP3 family. In terms of assembly, interacts with FAP91. Post-translationally, protein 3 is one of the 5 radial spoke proteins that are phosphorylated. Protein 3a might only differ from protein 3 in being unphosphorylated.

It localises to the cytoplasm. It is found in the cytoskeleton. The protein resides in the flagellum axoneme. Functionally, protein 3 may attach the radial spoke to the outer doublet microtubule or is required to form a stable spoke structure. In terms of biological role, flagellar radial spokes contribute to the regulation of dynein arm activity and thus the pattern of flagellar bending. They consist of a thin stalk, which is attached to the a subfiber of the outer doublet microtubule, and a bulbous head, which is attached to the stalk and appears to interact with the projections from the central pair of microtubules. The protein is Flagellar radial spoke protein 3 of Chlamydomonas reinhardtii (Chlamydomonas smithii).